The primary structure comprises 1173 residues: Protein GIGANTEA (1173 aa).

Disordered stretches follow at residues 150 to 187, 604 to 641, and 840 to 863; these read EQQN…RKPL, SGSK…NVKG, and SRTE…SGRP. Polar residues-rich tracts occupy residues 162–172 and 613–633; these read SKATTSGSPTS and YAST…QTAN. A compositionally biased stretch (basic and acidic residues) spans 854-863; that stretch reads RHSDEGSGRP.

This sequence belongs to the GIGANTEA family. In terms of assembly, interacts with SPY. Interacts with ADO1 (via N-terminus) and ADO2. Interacts with ADO3 (via N-terminus). Interacts (via N-terminus) with CDF1. Interacts (via N-terminus) with TCP4. Widely expressed with highest levels in inflorescence apices, young flowers and young siliques.

It localises to the nucleus. Its subcellular location is the cytoplasm. Involved in regulation of circadian rhythm and photoperiodic flowering. May play a role in maintenance of circadian amplitude and period length. Is involved in phytochrome B signaling. Stabilizes ADO3 and the circadian photoreceptor ADO1/ZTL. Regulates 'CONSTANS' (CO) in the long-day flowering pathway by modulating the ADO3-dependent protein stability of CDF1 and CDF2, but is not essential to activate CO transcription. Regulates, via the microRNA miR172, a CO-independent pathway that promotes photoperiodic flowering by inducing 'FLOWERING LOCUS T'. In Arabidopsis thaliana (Mouse-ear cress), this protein is Protein GIGANTEA (GI).